The sequence spans 790 residues: Choline transporter-like 2 (790 aa).

Residues 47–67 traverse the membrane as a helical segment; the sequence is PCLFLFVTFLCAWGYVAYYAV. 2 N-linked (GlcNAc...) asparagine glycosylation sites follow: Asn102 and Asn259. 3 helical membrane-spanning segments follow: residues 288–308, 319–339, and 344–364; these read IITPYLITIHNITVLLTFQMI, ILVFIACSVLASLILIAMLRW, and LVWISIIGVITALSYGVYYSF. An N-linked (GlcNAc...) asparagine glycan is attached at Asn384. Helical transmembrane passes span 400–420 and 449–469; these read LWILIALSVILIVLLLVVLVL and LVPWILQAVVIVFSLLVLLFL. Residue Asn483 is glycosylated (N-linked (GlcNAc...) asparagine). Transmembrane regions (helical) follow at residues 545–565, 592–612, 691–711, and 728–748; these read VIGFFWCICFVSAFSEMVLAF, VYYHLGTLAFGSLIIAICKII, VTGFLFFLSKLLLASGMAAVT, and FVPAVLVFIGTFIIASIFFSV.

It belongs to the CTL (choline transporter-like) family.

It is found in the membrane. The protein is Choline transporter-like 2 of Anopheles gambiae (African malaria mosquito).